Consider the following 81-residue polypeptide: Sec-independent protein translocase protein TatA (81 aa).

A helical membrane pass occupies residues 1–21 (MGGISVWQLLIIAVIVVLLFG). Positions 42 to 81 (AMSDEDSAKNEKDADFEPKSLEKQQQKEAAPETKKDKEQA) are disordered.

It belongs to the TatA/E family. The Tat system comprises two distinct complexes: a TatABC complex, containing multiple copies of TatA, TatB and TatC subunits, and a separate TatA complex, containing only TatA subunits. Substrates initially bind to the TatABC complex, which probably triggers association of the separate TatA complex to form the active translocon.

It is found in the cell inner membrane. In terms of biological role, part of the twin-arginine translocation (Tat) system that transports large folded proteins containing a characteristic twin-arginine motif in their signal peptide across membranes. TatA could form the protein-conducting channel of the Tat system. This Vibrio parahaemolyticus serotype O3:K6 (strain RIMD 2210633) protein is Sec-independent protein translocase protein TatA.